The sequence spans 245 residues: Ribosomal RNA small subunit methyltransferase G (245 aa).

S-adenosyl-L-methionine contacts are provided by residues Gly85, Phe90, Asp108–Thr110, Ala136–Glu137, and Arg155.

Belongs to the methyltransferase superfamily. RNA methyltransferase RsmG family.

It is found in the cytoplasm. Specifically methylates the N7 position of a guanine in 16S rRNA. In Trichormus variabilis (strain ATCC 29413 / PCC 7937) (Anabaena variabilis), this protein is Ribosomal RNA small subunit methyltransferase G.